A 248-amino-acid chain; its full sequence is Functional amyloid sbunit FapE (248 aa).

The first 20 residues, 1 to 20 (MNTSRWLTALCLAASMPAYA), serve as a signal peptide directing secretion.

The protein belongs to the FapE family. As to quaternary structure, a minor component of purified amyloid fibrils. Fibrils are resistant to boiling in 2% (weight/vol) SDS and require &gt;90% (vol/vol) formic acid to dissolve.

It localises to the fimbrium. It is found in the secreted. In terms of biological role, a minor component of the functional amyloid in this bacterium. Upon overexpression of the endogenous six-gene locus (fapA-fapF) in situ, cells form large clumps during liquid growth, make large amounts of biofilm and produce amyloid fibrils. Expression of the 6 gene operon in E.coli strain BL21(DE3) induces flocculation and biofilm formation with copious extracellular fibrils. The protein is Functional amyloid sbunit FapE of Pseudomonas fluorescens.